We begin with the raw amino-acid sequence, 335 residues long: Deoxyhypusine hydroxylase (335 aa).

HEAT-like PBS-type repeat units follow at residues Leu-71–Asp-97, Cys-104–Asn-130, Leu-200–Asp-233, Phe-238–Asn-264, and Val-271–Asp-298. Residues His-73, Glu-74, His-106, and Glu-107 each coordinate Fe cation. Residues His-240, Glu-241, His-273, and Glu-274 each contribute to the Fe cation site.

Belongs to the deoxyhypusine hydroxylase family. Requires Fe(2+) as cofactor.

It localises to the cytoplasm. It is found in the nucleus. It catalyses the reaction [eIF5A protein]-deoxyhypusine + AH2 + O2 = [eIF5A protein]-hypusine + A + H2O. Its pathway is protein modification; eIF5A hypusination. Functionally, catalyzes the hydroxylation of the N(6)-(4-aminobutyl)-L-lysine intermediate to form hypusine, an essential post-translational modification only found in mature eIF-5A factor. The protein is Deoxyhypusine hydroxylase (lia1) of Neosartorya fischeri (strain ATCC 1020 / DSM 3700 / CBS 544.65 / FGSC A1164 / JCM 1740 / NRRL 181 / WB 181) (Aspergillus fischerianus).